The following is a 255-amino-acid chain: Ribosomal RNA small subunit methyltransferase A (255 aa).

S-adenosyl-L-methionine-binding residues include N13, L15, G40, E61, D85, and N103.

This sequence belongs to the class I-like SAM-binding methyltransferase superfamily. rRNA adenine N(6)-methyltransferase family. RsmA subfamily.

It localises to the cytoplasm. It catalyses the reaction adenosine(1518)/adenosine(1519) in 16S rRNA + 4 S-adenosyl-L-methionine = N(6)-dimethyladenosine(1518)/N(6)-dimethyladenosine(1519) in 16S rRNA + 4 S-adenosyl-L-homocysteine + 4 H(+). In terms of biological role, specifically dimethylates two adjacent adenosines (A1518 and A1519) in the loop of a conserved hairpin near the 3'-end of 16S rRNA in the 30S particle. May play a critical role in biogenesis of 30S subunits. The protein is Ribosomal RNA small subunit methyltransferase A of Dechloromonas aromatica (strain RCB).